Reading from the N-terminus, the 262-residue chain is Type II restriction enzyme HinfI (262 aa).

The enzyme catalyses Endonucleolytic cleavage of DNA to give specific double-stranded fragments with terminal 5'-phosphates.. Functionally, a P subtype restriction enzyme that recognizes the double-stranded sequence 5'-GANTC-3' and cleaves after G-1. The chain is Type II restriction enzyme HinfI (hinfIR) from Haemophilus influenzae.